Here is a 459-residue protein sequence, read N- to C-terminus: Proton-coupled folate transporter (459 aa).

At Met-1 the chain carries N-acetylmethionine. Over 1 to 25 the chain is Cytoplasmic; the sequence is MEGRVSPVGSSHRLLTAAVLFRGPV. Position 6 is a phosphoserine (Ser-6). A helical membrane pass occupies residues 26–44; it reads EPLVFLANFALVLQGPLTT. The Extracellular portion of the chain corresponds to 45-82; it reads QYIWHRISTELGYNGTRHRENCGNQSADPVLKEVETLT. N-linked (GlcNAc...) asparagine glycosylation is found at Asn-58 and Asn-68. Cys-66 and Cys-298 are disulfide-bonded. A helical membrane pass occupies residues 83–108; sequence SHWTLYMNVGGFLVGLFWSTLLGAWS. The Cytoplasmic segment spans residues 109–112; it reads DRVG. Residues 113-135 traverse the membrane as a helical segment; it reads RRPLLVLASLGLLLQAVVSIFVV. The Extracellular segment spans residues 136–140; that stretch reads QLQLH. The helical transmembrane segment at 141–154 threads the bilayer; sequence IGFFVLGRALCALL. Topologically, residues 155-177 are cytoplasmic; sequence GDFNGLLAASFASVADVSSNHSR. Asp-156 and Glu-185 together coordinate H(+). A helical transmembrane segment spans residues 178–203; that stretch reads TFRMALLEACIGVAGTLASLLGGHWL. The Extracellular portion of the chain corresponds to 204 to 208; it reads RAQGY. A helical transmembrane segment spans residues 209–227; the sequence is ANPFWLALAVLIVMTLYAA. The Cytoplasmic portion of the chain corresponds to 228 to 266; sequence FCFGETVKEPKSTRLFTLRHHRSIVQLYVVPAPEKSRMH. The chain crosses the membrane as a helical span at residues 267 to 289; sequence LALYSLAIFVVVTVHFGAQDILT. His-281 serves as a coordination point for H(+). Over 290–302 the chain is Extracellular; that stretch reads LYELSTPLCWDSK. Residues 303–325 form a helical membrane-spanning segment; it reads LIGYGSAAQHLPYLTSLLGLRLL. At 326–331 the chain is on the cytoplasmic side; that stretch reads QFCLAD. A helical membrane pass occupies residues 332–351; that stretch reads TWVAEIGLAFNILGMVVFAF. Residues 352-355 lie on the Extracellular side of the membrane; it reads ATIT. Residues 356–376 form a helical membrane-spanning segment; sequence PLMFTGYGLLFLSLVTTPVIR. At 377–388 the chain is on the cytoplasmic side; the sequence is AKLSKLVSESEQ. A helical transmembrane segment spans residues 389-414; sequence GALFSAVACVNSLAMLMASGIFNSLY. The Extracellular portion of the chain corresponds to 415-422; the sequence is PATLNFMK. A helical membrane pass occupies residues 423 to 441; it reads GFPFLLGAGLLFIPAILIG. Residues 442-459 lie on the Cytoplasmic side of the membrane; sequence VLEKVNPHPEFQQFPQNS.

Belongs to the major facilitator superfamily. SLC46A family. Monomer. As to expression, expressed almost exclusively in the small intestine: expressed at high level in the upper half of the small intestine (duodenum and jejunum), expression decreases downwardly in the subsequent quarter and is undetectable in the last quarter (the lowest ileum). Expressed at low level in other tissues, including liver.

It is found in the cell membrane. Its subcellular location is the apical cell membrane. The protein resides in the basolateral cell membrane. It localises to the endosome membrane. The protein localises to the cytoplasm. The enzyme catalyses folate(in) + H(+)(in) = folate(out) + H(+)(out). It catalyses the reaction (6S)-5-methyl-5,6,7,8-tetrahydrofolate(in) + H(+)(in) = (6S)-5-methyl-5,6,7,8-tetrahydrofolate(out) + H(+)(out). The catalysed reaction is methotrexate(in) + H(+)(in) = methotrexate(out) + H(+)(out). It carries out the reaction pemetrexed(in) + H(+)(in) = pemetrexed(out) + H(+)(out). In contrast to human ortholog, not inhibited by myricetin. Functionally, proton-coupled folate symporter that mediates folate absorption using an H(+) gradient as a driving force. Involved in the intestinal absorption of folates at the brush-border membrane of the proximal jejunum, and the transport from blood to cerebrospinal fluid across the choroid plexus. Functions at acidic pH via alternate outward- and inward-open conformation states. Protonation of residues in the outward open state primes the protein for transport. Binding of folate promotes breaking of salt bridge network and subsequent closure of the extracellular gate, leading to the inward-open state and release of protons and folate. Also able to transport antifolate drugs, such as methotrexate and pemetrexed. Involved in FOLR1-mediated endocytosis by serving as a route of export of folates from acidified endosomes. Also acts as a lower-affinity, pH-independent heme carrier protein and constitutes the main importer of heme in the intestine. Imports heme in the retina and retinal pigment epithelium, in neurons of the hippocampus, in hepatocytes and in the renal epithelial cells. Hence, participates in the trafficking of heme and increases intracellular iron content. In Rattus norvegicus (Rat), this protein is Proton-coupled folate transporter.